Consider the following 123-residue polypeptide: MSVQNICSTKAYDMLISNDNAFLVDVRTREEWQQVGIPHLDNKNKVIFLSWQLNKDFEDNFLSIVNDKIHAIIFFLCRSGYRSFIAANFITNIGYKNCYNISDGFEGNNQDKGWKQNNLPWQF.

The Rhodanese domain maps to 17–117 (SNDNAFLVDV…NNQDKGWKQN (101 aa)).

This is an uncharacterized protein from Rickettsia conorii (strain ATCC VR-613 / Malish 7).